The sequence spans 270 residues: Pantoate kinase (270 aa).

It belongs to the GHMP kinase family. PoK subfamily.

The enzyme catalyses (R)-pantoate + ATP = (R)-4-phosphopantoate + ADP + H(+). It participates in cofactor biosynthesis; coenzyme A biosynthesis. Its function is as follows. Phosphorylates (R)-pantoate to form (R)-4-phosphopantoate in the CoA biosynthesis pathway. The sequence is that of Pantoate kinase from Methanocaldococcus jannaschii (strain ATCC 43067 / DSM 2661 / JAL-1 / JCM 10045 / NBRC 100440) (Methanococcus jannaschii).